Here is an 81-residue protein sequence, read N- to C-terminus: Acyl carrier protein (81 aa).

A Carrier domain is found at M1–K79. S39 bears the O-(pantetheine 4'-phosphoryl)serine mark.

This sequence belongs to the acyl carrier protein (ACP) family. 4'-phosphopantetheine is transferred from CoA to a specific serine of apo-ACP by AcpS. This modification is essential for activity because fatty acids are bound in thioester linkage to the sulfhydryl of the prosthetic group.

The protein resides in the cytoplasm. It functions in the pathway lipid metabolism; fatty acid biosynthesis. Its function is as follows. Carrier of the growing fatty acid chain in fatty acid biosynthesis. This chain is Acyl carrier protein, found in Syntrophobacter fumaroxidans (strain DSM 10017 / MPOB).